Consider the following 304-residue polypeptide: Acetylglutamate kinase (304 aa).

Residues 77–78, Arg99, and Asn201 contribute to the substrate site; that span reads GG.

This sequence belongs to the acetylglutamate kinase family. ArgB subfamily.

It localises to the cytoplasm. It carries out the reaction N-acetyl-L-glutamate + ATP = N-acetyl-L-glutamyl 5-phosphate + ADP. It participates in amino-acid biosynthesis; L-arginine biosynthesis; N(2)-acetyl-L-ornithine from L-glutamate: step 2/4. Catalyzes the ATP-dependent phosphorylation of N-acetyl-L-glutamate. This Methylibium petroleiphilum (strain ATCC BAA-1232 / LMG 22953 / PM1) protein is Acetylglutamate kinase.